The chain runs to 453 residues: Verruculogen prenyltransferase (453 aa).

Residue Glu89 coordinates substrate. Arg102, Lys194, Tyr196, Lys273, Tyr275, Tyr378, Tyr443, and Tyr447 together coordinate dimethylallyl diphosphate.

This sequence belongs to the tryptophan dimethylallyltransferase family.

It carries out the reaction verruculogen + dimethylallyl diphosphate = fumitremorgin A + diphosphate. It functions in the pathway mycotoxin biosynthesis. In terms of biological role, verruculogen prenyltransferase; part of the gene cluster that mediates the biosynthesis of fumitremorgins, indole alkaloids that carry not only intriguing chemical structures, but also interesting biological and pharmacological activities. The biosynthesis of fumitremorgin-type alkaloids begins by condensation of the two amino acids L-tryptophan and L-proline to brevianamide F, catalyzed by the non-ribosomal peptide synthetase ftmPS/ftmA. Brevianamide F is then prenylated by the prenyltransferase ftmPT1/ftmB in the presence of dimethylallyl diphosphate, resulting in the formation of tryprostatin B. The three cytochrome P450 monooxygenases, ftmP450-1/ftmC, ftmP450-2/ftmE and ftmP450-3/FtmG, are responsible for the conversion of tryprostatin B to 6-hydroxytryprostatin B, tryprostatin A to fumitremorgin C and fumitremorgin C to 12,13-dihydroxyfumitremorgin C, respectively. The putative methyltransferase ftmMT/ftmD is expected for the conversion of 6-hydroxytryprostatin B to tryprostatin A. FtmPT2/FtmH catalyzes the prenylation of 12,13-dihydroxyfumitre-morgin C in the presence of dimethylallyl diphosphate, resulting in the formation of fumitremorgin B. Fumitremorgin B is further converted to verruculogen by ftmOx1/ftmF via the insertion of an endoperoxide bond between the two prenyl moieties. Finally, verruculogen is further converted to fumitremorgin A by the verruculogen prenyltransferase ftmPT3. The sequence is that of Verruculogen prenyltransferase from Neosartorya fischeri (strain ATCC 1020 / DSM 3700 / CBS 544.65 / FGSC A1164 / JCM 1740 / NRRL 181 / WB 181) (Aspergillus fischerianus).